Reading from the N-terminus, the 329-residue chain is GTP 3',8-cyclase (329 aa).

The region spanning 8 to 234 (AFARKFYYLR…QLRQRSDGPA (227 aa)) is the Radical SAM core domain. Arginine 17 serves as a coordination point for GTP. Residues cysteine 24 and cysteine 28 each contribute to the [4Fe-4S] cluster site. Residue tyrosine 30 coordinates S-adenosyl-L-methionine. Residue cysteine 31 coordinates [4Fe-4S] cluster. Residue arginine 68 coordinates GTP. Glycine 72 contributes to the S-adenosyl-L-methionine binding site. A GTP-binding site is contributed by threonine 99. Serine 123 is a binding site for S-adenosyl-L-methionine. Lysine 160 is a binding site for GTP. Methionine 194 contacts S-adenosyl-L-methionine. [4Fe-4S] cluster-binding residues include cysteine 257 and cysteine 260. 262-264 (RLR) contributes to the GTP binding site. Cysteine 274 contributes to the [4Fe-4S] cluster binding site.

Belongs to the radical SAM superfamily. MoaA family. As to quaternary structure, monomer and homodimer. [4Fe-4S] cluster serves as cofactor.

It catalyses the reaction GTP + AH2 + S-adenosyl-L-methionine = (8S)-3',8-cyclo-7,8-dihydroguanosine 5'-triphosphate + 5'-deoxyadenosine + L-methionine + A + H(+). It functions in the pathway cofactor biosynthesis; molybdopterin biosynthesis. In terms of biological role, catalyzes the cyclization of GTP to (8S)-3',8-cyclo-7,8-dihydroguanosine 5'-triphosphate. This is GTP 3',8-cyclase from Salmonella dublin (strain CT_02021853).